The chain runs to 420 residues: Histidine--tRNA ligase (420 aa).

Belongs to the class-II aminoacyl-tRNA synthetase family. In terms of assembly, homodimer.

It localises to the cytoplasm. The enzyme catalyses tRNA(His) + L-histidine + ATP = L-histidyl-tRNA(His) + AMP + diphosphate + H(+). The polypeptide is Histidine--tRNA ligase (Thermodesulfovibrio yellowstonii (strain ATCC 51303 / DSM 11347 / YP87)).